The chain runs to 178 residues: Platelet inhibitor triplatin-2 (178 aa).

An N-terminal signal peptide occupies residues 1–18 (MKMIISLTFLGILMLAFA). 3 disulfides stabilise this stretch: C25/C134, C60/C178, and C90/C106.

This sequence belongs to the calycin superfamily. Triabin family. In terms of tissue distribution, expressed in salivary glands.

It localises to the secreted. Functionally, inhibits platelet aggregation and vasoconstriction through binding to distinct eicosanoids involved in inflammation (acts as a scavenger), and has a role in inhibiting host innate immunity by impairing platelet-assisted formation of neutrophil extracellular traps (NETs). Inhibits platelet aggregation by collagen, and low doses of thromboxane A2 mimetic (TXA2 mimetic), and arachidonic acid (AA) without affecting aggregation induced by ADP, convulxin (GP6 agonist), and PMA. Binds to TXA2, TXB2, prostaglandine H2 mimetic (PGH2 mimetic), PGJ2, and PGF2alpha. Binding is not observed to leukotrienes, AA, and biogenic amines (PGE1, 5(S)-HETE, 12(S)-HETE, 20-HETE, norepinephrine, epinephrine, serotonin, LTC4 and ADP). Induces relaxation of aorta rat previously contracted with TXA2 mimetic. Moreover, it also impairs platelet-assisted formation of neutrophil extracellular traps (NETs). NETs are web-like structures of DNA and proteins that play an important role in killing of pathogens. In addition, NETs are implicated in thrombus formation. In vivo, this protein exhibits antithrombotic activity in two distinct mice models that are highly dependent on platelets. It is noteworthy that it inhibits thrombosis without promoting excessive bleeding. This is Platelet inhibitor triplatin-2 from Triatoma infestans (Assassin bug).